A 157-amino-acid polypeptide reads, in one-letter code: Pyruvoyl-dependent arginine decarboxylase 1 (157 aa).

Serine 41 carries the pyruvic acid (Ser) modification.

This sequence belongs to the PdaD family. It depends on pyruvate as a cofactor.

It catalyses the reaction L-arginine + H(+) = agmatine + CO2. In Archaeoglobus fulgidus (strain ATCC 49558 / DSM 4304 / JCM 9628 / NBRC 100126 / VC-16), this protein is Pyruvoyl-dependent arginine decarboxylase 1 (pdaD1).